The chain runs to 898 residues: Protein kintoun (898 aa).

Disordered regions lie at residues glycine 558–aspartate 680 and isoleucine 765–serine 822. Residues isoleucine 575 to glycine 602 show a composition bias toward basic and acidic residues. Basic residues predominate over residues lysine 603 to arginine 616. The span at asparagine 641 to threonine 656 shows a compositional bias: polar residues.

This sequence belongs to the PIH1 family. Kintoun subfamily.

The protein localises to the cytoplasm. In terms of biological role, required for cytoplasmic pre-assembly of axonemal dyneins, thereby playing a central role in motility in cilia and flagella. Involved in pre-assembly of dynein arm complexes in the cytoplasm before intraflagellar transport loads them for the ciliary compartment. This is Protein kintoun from Aedes aegypti (Yellowfever mosquito).